We begin with the raw amino-acid sequence, 235 residues long: 7-cyano-7-deazaguanine synthase (235 aa).

ATP is bound at residue Cys7–Ala17. Cys185, Cys193, Cys196, and Cys199 together coordinate Zn(2+).

This sequence belongs to the QueC family. It depends on Zn(2+) as a cofactor.

It catalyses the reaction 7-carboxy-7-deazaguanine + NH4(+) + ATP = 7-cyano-7-deazaguanine + ADP + phosphate + H2O + H(+). The protein operates within purine metabolism; 7-cyano-7-deazaguanine biosynthesis. Its function is as follows. Catalyzes the ATP-dependent conversion of 7-carboxy-7-deazaguanine (CDG) to 7-cyano-7-deazaguanine (preQ(0)). This Allorhizobium ampelinum (strain ATCC BAA-846 / DSM 112012 / S4) (Agrobacterium vitis (strain S4)) protein is 7-cyano-7-deazaguanine synthase.